A 124-amino-acid polypeptide reads, in one-letter code: MARLAGVDIPREKRVEVALTYIYGVGRTRALQTLRETEISGEIRVKDLTDEQLVSLRDYIEGNFKVEGDLRREVAADIRRKVEIGSYEGIRHRKGLPVRGQRTKTNARTRKGPKRTVAGKKKAR.

Positions 95–124 (GLPVRGQRTKTNARTRKGPKRTVAGKKKAR) are disordered.

The protein belongs to the universal ribosomal protein uS13 family. As to quaternary structure, part of the 30S ribosomal subunit. Forms a loose heterodimer with protein S19. Forms two bridges to the 50S subunit in the 70S ribosome.

Its function is as follows. Located at the top of the head of the 30S subunit, it contacts several helices of the 16S rRNA. In the 70S ribosome it contacts the 23S rRNA (bridge B1a) and protein L5 of the 50S subunit (bridge B1b), connecting the 2 subunits; these bridges are implicated in subunit movement. Contacts the tRNAs in the A and P-sites. The protein is Small ribosomal subunit protein uS13 of Leifsonia xyli subsp. xyli (strain CTCB07).